The sequence spans 415 residues: Gamma-glutamyl phosphate reductase (415 aa).

It belongs to the gamma-glutamyl phosphate reductase family.

It localises to the cytoplasm. It catalyses the reaction L-glutamate 5-semialdehyde + phosphate + NADP(+) = L-glutamyl 5-phosphate + NADPH + H(+). Its pathway is amino-acid biosynthesis; L-proline biosynthesis; L-glutamate 5-semialdehyde from L-glutamate: step 2/2. Its function is as follows. Catalyzes the NADPH-dependent reduction of L-glutamate 5-phosphate into L-glutamate 5-semialdehyde and phosphate. The product spontaneously undergoes cyclization to form 1-pyrroline-5-carboxylate. The sequence is that of Gamma-glutamyl phosphate reductase from Mycolicibacterium gilvum (strain PYR-GCK) (Mycobacterium gilvum (strain PYR-GCK)).